The sequence spans 572 residues: Dihydroxy-acid dehydratase (572 aa).

C57 contributes to the [2Fe-2S] cluster binding site. D89 contacts Mg(2+). C130 lines the [2Fe-2S] cluster pocket. Mg(2+)-binding residues include D131 and K132. K132 is modified (N6-carboxylysine). C202 provides a ligand contact to [2Fe-2S] cluster. E453 contributes to the Mg(2+) binding site. S479 functions as the Proton acceptor in the catalytic mechanism.

The protein belongs to the IlvD/Edd family. As to quaternary structure, homodimer. [2Fe-2S] cluster is required as a cofactor. The cofactor is Mg(2+).

The enzyme catalyses (2R)-2,3-dihydroxy-3-methylbutanoate = 3-methyl-2-oxobutanoate + H2O. The catalysed reaction is (2R,3R)-2,3-dihydroxy-3-methylpentanoate = (S)-3-methyl-2-oxopentanoate + H2O. Its pathway is amino-acid biosynthesis; L-isoleucine biosynthesis; L-isoleucine from 2-oxobutanoate: step 3/4. The protein operates within amino-acid biosynthesis; L-valine biosynthesis; L-valine from pyruvate: step 3/4. In terms of biological role, functions in the biosynthesis of branched-chain amino acids. Catalyzes the dehydration of (2R,3R)-2,3-dihydroxy-3-methylpentanoate (2,3-dihydroxy-3-methylvalerate) into 2-oxo-3-methylpentanoate (2-oxo-3-methylvalerate) and of (2R)-2,3-dihydroxy-3-methylbutanoate (2,3-dihydroxyisovalerate) into 2-oxo-3-methylbutanoate (2-oxoisovalerate), the penultimate precursor to L-isoleucine and L-valine, respectively. In Streptococcus thermophilus (strain CNRZ 1066), this protein is Dihydroxy-acid dehydratase.